A 95-amino-acid polypeptide reads, in one-letter code: Putative septation protein SpoVG (95 aa).

It belongs to the SpoVG family.

In terms of biological role, could be involved in septation. This chain is Putative septation protein SpoVG, found in Brevibacillus brevis (strain 47 / JCM 6285 / NBRC 100599).